Reading from the N-terminus, the 375-residue chain is 23S rRNA (uracil(747)-C(5))-methyltransferase RlmC (375 aa).

Residues C3, C11, C14, and C87 each coordinate [4Fe-4S] cluster. S-adenosyl-L-methionine is bound by residues Q212, F241, E262, and N307. C334 (nucleophile) is an active-site residue.

Belongs to the class I-like SAM-binding methyltransferase superfamily. RNA M5U methyltransferase family. RlmC subfamily.

It catalyses the reaction uridine(747) in 23S rRNA + S-adenosyl-L-methionine = 5-methyluridine(747) in 23S rRNA + S-adenosyl-L-homocysteine + H(+). In terms of biological role, catalyzes the formation of 5-methyl-uridine at position 747 (m5U747) in 23S rRNA. This chain is 23S rRNA (uracil(747)-C(5))-methyltransferase RlmC, found in Xenorhabdus nematophila (strain ATCC 19061 / DSM 3370 / CCUG 14189 / LMG 1036 / NCIMB 9965 / AN6).